The following is a 323-amino-acid chain: Large ribosomal subunit protein uL10x (323 aa).

A disordered region spans residues 287-323; the sequence is DAGGGSAQAGAAAKVEEKKEESDEEDYEGGFGLFDEE. A Phosphoserine modification is found at Ser-308. Over residues 308–323 the composition is skewed to acidic residues; sequence SDEEDYEGGFGLFDEE. Tyr-313 is subject to Phosphotyrosine.

Belongs to the universal ribosomal protein uL10 family. In terms of assembly, P0 forms a pentameric complex by interaction with dimers of P1 and P2.

Ribosomal protein P0 is the functional equivalent of E.coli protein L10. This is Large ribosomal subunit protein uL10x (RPP0C) from Arabidopsis thaliana (Mouse-ear cress).